The chain runs to 853 residues: Leucine--tRNA ligase (853 aa).

The 'HIGH' region signature appears at 42–52; that stretch reads PYPSGNLHMGH. The short motif at 615–619 is the 'KMSKS' region element; it reads KMSKS. Residue Lys-618 participates in ATP binding.

The protein belongs to the class-I aminoacyl-tRNA synthetase family.

It is found in the cytoplasm. It catalyses the reaction tRNA(Leu) + L-leucine + ATP = L-leucyl-tRNA(Leu) + AMP + diphosphate. The polypeptide is Leucine--tRNA ligase (Crocosphaera subtropica (strain ATCC 51142 / BH68) (Cyanothece sp. (strain ATCC 51142))).